Consider the following 519-residue polypeptide: FAD-dependent monooxygenase macF (519 aa).

An N-terminal signal peptide occupies residues 1 to 20 (MTKMTSIIGILMGVLTTATA). In terms of domain architecture, FAD-binding PCMH-type spans 88 to 262 (CRLNASCIVT…TEYDLTTNTG (175 aa)). His125 carries the post-translational modification Pros-8alpha-FAD histidine.

The protein belongs to the oxygen-dependent FAD-linked oxidoreductase family.

The protein operates within secondary metabolite biosynthesis; terpenoid biosynthesis. In terms of biological role, FAD-dependent monooxygenase; part of the gene cluster that mediates the biosynthesis of macrophorins, isoprenoid epoxycyclohexenones containing cyclized drimane moieties. The first step of the pathway is the synthesis of 6-methylsalicylic acid (6-MSA) by the polyketide synthase macA. 6-MSA is then converted to m-cresol by the decarboxylase macB. The cytochrome P450 monooxygenase macC then catalyzes the oxidation of m-cresol to toluquinol. Epoxidation of toluquinol is then performed by the short chain dehydrogenase macD, with the help of macE, and a further prenylation by macG leads to 7-deacetoxyyanuthone A. The next step is the hydroxylation of C-22 of 7-deacetoxyyanuthone A by the cytochrome P450 monooxygenase macH to yield 22-deacetylyanuthone A. O-Mevalon transferase macI then attaches mevalon to the hydroxyl group of 22-deacetylyanuthone A to produce yanuthone E. The terpene cyclase macJ catalyzes the cyclization of 22-deacetylyanuthone A to macrophorin A. MacJ is also able to catalyze cyclization of yanuthone E and 7-deacetoxyyanuthone A to their corresponding macrophorins. The macJ products can be further modified by macH and macJ, as well as by the FAD-dependent monooxygenase macF, to produce additional macrophorins, including 4'-oxomacrophorin A, 4'-oxomacrophorin D and 4'-oxomacrophorin E. The chain is FAD-dependent monooxygenase macF from Penicillium terrestre.